Here is a 702-residue protein sequence, read N- to C-terminus: uncharacterized protein (702 aa).

Composition is skewed to low complexity over residues 306-384 (NNNN…NNNN), 488-511 (PTKT…TNIT), 559-590 (QQSQ…NNNN), 603-612 (SNQNSNNNNQ), and 621-639 (NNNN…NNNN). Disordered stretches follow at residues 306 to 385 (NNNN…NNNE), 488 to 513 (PTKT…ITYG), and 551 to 645 (STMN…NSRY). Residues 337–489 (NNINNNINNN…IKSLDILSPT (153 aa)) enclose the VPS9 domain.

This is an uncharacterized protein from Dictyostelium discoideum (Social amoeba).